Consider the following 881-residue polypeptide: Alanine--tRNA ligase (881 aa).

Zn(2+) contacts are provided by H565, H569, C672, and H676.

Belongs to the class-II aminoacyl-tRNA synthetase family. Zn(2+) serves as cofactor.

It is found in the cytoplasm. It carries out the reaction tRNA(Ala) + L-alanine + ATP = L-alanyl-tRNA(Ala) + AMP + diphosphate. Catalyzes the attachment of alanine to tRNA(Ala) in a two-step reaction: alanine is first activated by ATP to form Ala-AMP and then transferred to the acceptor end of tRNA(Ala). Also edits incorrectly charged Ser-tRNA(Ala) and Gly-tRNA(Ala) via its editing domain. The sequence is that of Alanine--tRNA ligase from Novosphingobium aromaticivorans (strain ATCC 700278 / DSM 12444 / CCUG 56034 / CIP 105152 / NBRC 16084 / F199).